Here is a 676-residue protein sequence, read N- to C-terminus: ATP-dependent RNA helicase dbp-9 (676 aa).

A disordered region spans residues 1–97; that stretch reads MAKRKLNETD…SEKDDADLTF (97 aa). Basic and acidic residues predominate over residues 70 to 90; it reads QQLKDEQKQQDEKDEKKQSEK. The short motif at 95–123 is the Q motif element; the sequence is LTFSDLGLDPRLVQAVAKQSFEKPTLVQR. In terms of domain architecture, Helicase ATP-binding spans 126–304; it reads IPLALAGQDV…KGFFCRNPTM (179 aa). 139 to 146 contributes to the ATP binding site; it reads AKTGSGKT. A DEAD box motif is present at residues 251 to 254; sequence DEAD. Residues 317-541 form the Helicase C-terminal domain; that stretch reads KLTQFYVKCG…PYNFNKDQME (225 aa). A compositionally biased stretch (basic and acidic residues) spans 410–432; the sequence is EDEKTEEKKEEQGEKKEGDEKKN. 2 disordered regions span residues 410–444 and 633–676; these read EDEKTEEKKEEQGEKKEGDEKKNGKGKKKKGRRDQ and FKKQ…RVRK. A compositionally biased stretch (basic residues) spans 642–663; it reads TRGKKGAKGGKGGHGKYKKGPG.

Belongs to the DEAD box helicase family. DDX56/DBP9 subfamily.

It is found in the nucleus. It localises to the nucleolus. The enzyme catalyses ATP + H2O = ADP + phosphate + H(+). Functionally, ATP-binding RNA helicase involved in the biogenesis of 60S ribosomal subunits and is required for the normal formation of 25S and 5.8S rRNAs. The chain is ATP-dependent RNA helicase dbp-9 (dbp-9) from Neurospora crassa (strain ATCC 24698 / 74-OR23-1A / CBS 708.71 / DSM 1257 / FGSC 987).